Consider the following 360-residue polypeptide: DNA replication and repair protein RecF (360 aa).

30–37 provides a ligand contact to ATP; the sequence is GHNGSGKT.

The protein belongs to the RecF family.

The protein resides in the cytoplasm. The RecF protein is involved in DNA metabolism; it is required for DNA replication and normal SOS inducibility. RecF binds preferentially to single-stranded, linear DNA. It also seems to bind ATP. The protein is DNA replication and repair protein RecF of Shewanella amazonensis (strain ATCC BAA-1098 / SB2B).